Reading from the N-terminus, the 79-residue chain is U-scoloptoxin(15)-Sm1a (79 aa).

Positions 1-25 (MKMNVVVLSVVVLLLFIANIQQTEA) are cleaved as a signal peptide.

This sequence belongs to the scoloptoxin-15 family. Contains 2 disulfide bonds. Expressed by the venom gland.

The protein localises to the secreted. The chain is U-scoloptoxin(15)-Sm1a from Scolopendra morsitans (Tanzanian blue ringleg centipede).